A 310-amino-acid chain; its full sequence is Ribose-phosphate pyrophosphokinase (310 aa).

ATP is bound by residues 33 to 35 (DGE) and 92 to 93 (RQ). Residues H127 and D166 each coordinate Mg(2+). Residue K189 is part of the active site. D-ribose 5-phosphate-binding positions include R191, D215, and 219-223 (DTAGT).

This sequence belongs to the ribose-phosphate pyrophosphokinase family. Class I subfamily. Homohexamer. Mg(2+) is required as a cofactor.

The protein resides in the cytoplasm. It catalyses the reaction D-ribose 5-phosphate + ATP = 5-phospho-alpha-D-ribose 1-diphosphate + AMP + H(+). It participates in metabolic intermediate biosynthesis; 5-phospho-alpha-D-ribose 1-diphosphate biosynthesis; 5-phospho-alpha-D-ribose 1-diphosphate from D-ribose 5-phosphate (route I): step 1/1. Its function is as follows. Involved in the biosynthesis of the central metabolite phospho-alpha-D-ribosyl-1-pyrophosphate (PRPP) via the transfer of pyrophosphoryl group from ATP to 1-hydroxyl of ribose-5-phosphate (Rib-5-P). The sequence is that of Ribose-phosphate pyrophosphokinase from Bordetella pertussis (strain Tohama I / ATCC BAA-589 / NCTC 13251).